The chain runs to 486 residues: Aspartyl/glutamyl-tRNA(Asn/Gln) amidotransferase subunit B (486 aa).

It belongs to the GatB/GatE family. GatB subfamily. Heterotrimer of A, B and C subunits.

It catalyses the reaction L-glutamyl-tRNA(Gln) + L-glutamine + ATP + H2O = L-glutaminyl-tRNA(Gln) + L-glutamate + ADP + phosphate + H(+). The catalysed reaction is L-aspartyl-tRNA(Asn) + L-glutamine + ATP + H2O = L-asparaginyl-tRNA(Asn) + L-glutamate + ADP + phosphate + 2 H(+). Allows the formation of correctly charged Asn-tRNA(Asn) or Gln-tRNA(Gln) through the transamidation of misacylated Asp-tRNA(Asn) or Glu-tRNA(Gln) in organisms which lack either or both of asparaginyl-tRNA or glutaminyl-tRNA synthetases. The reaction takes place in the presence of glutamine and ATP through an activated phospho-Asp-tRNA(Asn) or phospho-Glu-tRNA(Gln). In Leptospira interrogans serogroup Icterohaemorrhagiae serovar Lai (strain 56601), this protein is Aspartyl/glutamyl-tRNA(Asn/Gln) amidotransferase subunit B.